We begin with the raw amino-acid sequence, 469 residues long: Keratin, type II cytoskeletal 7 (469 aa).

At Ser2 the chain carries N-acetylserine. A phosphoserine mark is found at Ser2, Ser6, and Ser7. The segment at 2–90 is head; sequence SIHFSSPVFT…DPSLQRVRQE (89 aa). Residue Ser12 is glycosylated (O-linked (GlcNAc) serine). A Dimethylated arginine; alternate modification is found at Arg20. Arg20 carries the post-translational modification Omega-N-methylarginine; alternate. Residues Ser53, Ser71, and Ser83 each carry the phosphoserine modification. The interval 90–126 is coil 1A; the sequence is EEREQIKTLNNKFASFIDKVRFLEQQNKLLETKWTLL. The region spanning 91–403 is the IF rod domain; that stretch reads EREQIKTLNN…KLLEGEESRL (313 aa). Residue Thr97 is modified to Phosphothreonine. Residues 127-144 are linker 1; it reads QEQKSAKSSRLPDIFEAQ. Lys130 is covalently cross-linked (Glycyl lysine isopeptide (Lys-Gly) (interchain with G-Cter in SUMO2)). A coil 1B region spans residues 145-236; it reads IAGLRGQLEA…TLNETELTEL (92 aa). Lys179 carries the N6-acetyllysine modification. The tract at residues 237 to 260 is linker 12; the sequence is QSQISDTSVVLSMDNSRSLDLDGI. Residues Ser252 and Ser254 each carry the phosphoserine modification. Residues 261–399 form a coil 2 region; that stretch reads IAEVKAQYEE…ATYRKLLEGE (139 aa). Glycyl lysine isopeptide (Lys-Gly) (interchain with G-Cter in SUMO2) cross-links involve residues Lys265 and Lys286. The residue at position 289 (Thr289) is a Phosphothreonine. Residues Lys296 and Lys331 each participate in a glycyl lysine isopeptide (Lys-Gly) (interchain with G-Cter in SUMO2) cross-link. The interval 400–469 is tail; it reads ESRLAGDGVG…ASASRRSARN (70 aa).

This sequence belongs to the intermediate filament family. In terms of assembly, heterotetramer of two type I and two type II keratins. Interacts with eukaryotic translation initiator factor 3 (eIF3) subunit EIF3S10. Interacts with GPER1. In terms of processing, arg-20 is dimethylated, probably to asymmetric dimethylarginine.

Blocks interferon-dependent interphase and stimulates DNA synthesis in cells. This is Keratin, type II cytoskeletal 7 from Pan troglodytes (Chimpanzee).